The primary structure comprises 144 residues: Transcriptional regulator SlyA (144 aa).

The region spanning 2 to 135 (ESSLGSDLAR…LNNIIAKLER (134 aa)) is the HTH marR-type domain. Positions 49–72 (QIQLAKAIGIEQPSLVRTLDQLES) form a DNA-binding region, H-T-H motif.

The protein belongs to the SlyA family. In terms of assembly, homodimer.

Transcription regulator that can specifically activate or repress expression of target genes. The sequence is that of Transcriptional regulator SlyA from Blochmanniella floridana.